The chain runs to 162 residues: Phenazine biosynthesis protein PhzB1 (162 aa).

This sequence belongs to the PhzA/PhzB family. As to quaternary structure, homodimer.

It participates in antibiotic biosynthesis; phenazine biosynthesis. In terms of biological role, involved in the biosynthesis of the antibiotic phenazine, a nitrogen-containing heterocyclic molecule. PhzB1 (operon phzA1B1C1E1F1G1) has a role in the biosynthesis of the phenazine during planktonic growth. This chain is Phenazine biosynthesis protein PhzB1, found in Pseudomonas aeruginosa (strain ATCC 15692 / DSM 22644 / CIP 104116 / JCM 14847 / LMG 12228 / 1C / PRS 101 / PAO1).